The chain runs to 524 residues: L-tyrosine:2-oxoglutarate aminotransferase atrD (524 aa).

It belongs to the class-I pyridoxal-phosphate-dependent aminotransferase family. Requires pyridoxal 5'-phosphate as cofactor.

The catalysed reaction is L-tyrosine + 2-oxoglutarate = 3-(4-hydroxyphenyl)pyruvate + L-glutamate. Its pathway is secondary metabolite biosynthesis. Functionally, the L-tyrosine:2-oxoglutarate aminotransferase atrD and the atromentin synthetase atrA catalyze consecutive steps to turn over L-tyrosine into atromentin, which represents the generic precursor molecule for the entire terphenylquinone and pulvinic acid family of pigments, which are widely distributed secondary metabolites in homobasidiomycetes. The first step is catalyzed by atrD which converts L-tyrosine in to 4-hydroxyphenylpyruvate (4-HPP). Adenylation of two 4-HPP monomers by the atrA adenylation (A) domain, ester bond formation between monomers and atrA, and symmetric C-C-bond formation between two monomers by atrA leads to atromentin. This is L-tyrosine:2-oxoglutarate aminotransferase atrD from Tapinella panuoides (Oyster rollrim mushroom).